Consider the following 360-residue polypeptide: Phosphoserine aminotransferase (360 aa).

R41 is an L-glutamate binding site. The pyridoxal 5'-phosphate site is built by W101, T152, D172, and Q195. K196 carries the N6-(pyridoxal phosphate)lysine modification. 237–238 (NT) is a binding site for pyridoxal 5'-phosphate.

This sequence belongs to the class-V pyridoxal-phosphate-dependent aminotransferase family. SerC subfamily. In terms of assembly, homodimer. The cofactor is pyridoxal 5'-phosphate.

It is found in the cytoplasm. The enzyme catalyses O-phospho-L-serine + 2-oxoglutarate = 3-phosphooxypyruvate + L-glutamate. It catalyses the reaction 4-(phosphooxy)-L-threonine + 2-oxoglutarate = (R)-3-hydroxy-2-oxo-4-phosphooxybutanoate + L-glutamate. Its pathway is amino-acid biosynthesis; L-serine biosynthesis; L-serine from 3-phospho-D-glycerate: step 2/3. It participates in cofactor biosynthesis; pyridoxine 5'-phosphate biosynthesis; pyridoxine 5'-phosphate from D-erythrose 4-phosphate: step 3/5. Catalyzes the reversible conversion of 3-phosphohydroxypyruvate to phosphoserine and of 3-hydroxy-2-oxo-4-phosphonooxybutanoate to phosphohydroxythreonine. This Paraburkholderia phymatum (strain DSM 17167 / CIP 108236 / LMG 21445 / STM815) (Burkholderia phymatum) protein is Phosphoserine aminotransferase.